We begin with the raw amino-acid sequence, 355 residues long: DNA polymerase IV (355 aa).

In terms of domain architecture, UmuC spans 7 to 188 (IIHIDMDCFY…LPVRKLFGVG (182 aa)). Positions 11 and 106 each coordinate Mg(2+). Residue glutamate 107 is part of the active site.

Belongs to the DNA polymerase type-Y family. Monomer. Mg(2+) serves as cofactor.

The protein localises to the cytoplasm. It catalyses the reaction DNA(n) + a 2'-deoxyribonucleoside 5'-triphosphate = DNA(n+1) + diphosphate. Its function is as follows. Poorly processive, error-prone DNA polymerase involved in untargeted mutagenesis. Copies undamaged DNA at stalled replication forks, which arise in vivo from mismatched or misaligned primer ends. These misaligned primers can be extended by PolIV. Exhibits no 3'-5' exonuclease (proofreading) activity. May be involved in translesional synthesis, in conjunction with the beta clamp from PolIII. In Legionella pneumophila subsp. pneumophila (strain Philadelphia 1 / ATCC 33152 / DSM 7513), this protein is DNA polymerase IV.